We begin with the raw amino-acid sequence, 495 residues long: Keratin, type II cuticular 87 (495 aa).

The head stretch occupies residues 1 to 111; sequence MSCFSSRLGA…PNAQCVKHEE (111 aa). Positions 111 to 422 constitute an IF rod domain; the sequence is EKEQIKCLNS…RLLEGEEQRL (312 aa). The segment at 112 to 146 is coil 1A; the sequence is KEQIKCLNSKFAAFIDKVRFLEQQNKLLETKWQFY. The segment at 147–156 is linker 1; that stretch reads QNRKCCESNM. Residues 157 to 257 are coil 1B; it reads EPLFEGYIEA…YEEETRLLHS (101 aa). A linker 12 region spans residues 258 to 274; that stretch reads HISDTSVVVKMDNSRDL. Residues 275-418 are coil 2; it reads NMDCVVAEIK…ITYRRLLEGE (144 aa). Residues 419–494 are tail; it reads EQRLCEGVGS…TCGSSRSVRF (76 aa).

Belongs to the intermediate filament family. Heterotetramer of two type I and two type II keratins.

This chain is Keratin, type II cuticular 87, found in Mus musculus (Mouse).